A 165-amino-acid polypeptide reads, in one-letter code: Chorismate pyruvate-lyase (165 aa).

Arg-77, Leu-115, and Glu-156 together coordinate substrate.

The protein belongs to the UbiC family. As to quaternary structure, monomer.

The protein resides in the cytoplasm. The catalysed reaction is chorismate = 4-hydroxybenzoate + pyruvate. The protein operates within cofactor biosynthesis; ubiquinone biosynthesis. Removes the pyruvyl group from chorismate, with concomitant aromatization of the ring, to provide 4-hydroxybenzoate (4HB) for the ubiquinone pathway. In Salmonella typhi, this protein is Chorismate pyruvate-lyase.